A 342-amino-acid polypeptide reads, in one-letter code: Heat-inducible transcription repressor HrcA (342 aa).

This sequence belongs to the HrcA family.

Negative regulator of class I heat shock genes (grpE-dnaK-dnaJ and groELS operons). Prevents heat-shock induction of these operons. The protein is Heat-inducible transcription repressor HrcA of Acholeplasma laidlawii.